The chain runs to 717 residues: Segment polarity protein dishevelled homolog DVL-3 (717 aa).

The DIX domain maps to 1–82 (MGETKVIYHL…RVVCWLVSAD (82 aa)). Residues 89–235 (GSVCADIQSD…PQIERSSSFS (147 aa)) are disordered. The segment covering 118–127 (HPNTRGSQEN) has biased composition (polar residues). Positions 140–155 (ARRERPGRKETSEHAT) are enriched in basic and acidic residues. Residues 173 to 189 (ESSSTLMSSELDSTSFF) show a composition bias toward low complexity. The segment covering 199 to 210 (RFSNSTEQSSAS) has biased composition (polar residues). The segment covering 212 to 224 (LMRRHKRRRRKPK) has biased composition (basic residues). Residues 248–333 (TVTLNMEKYN…KPGPITLTVA (86 aa)) enclose the PDZ domain. The DEP domain occupies 421 to 495 (SESGLEVRDR…SEQCYYIFGD (75 aa)). Residues 552-653 (PDPAYIYGGG…THQSFGPPGI (102 aa)) are disordered. Residues 564–579 (GSQHSEGSRSSGSNRS) show a composition bias toward low complexity. Composition is skewed to basic and acidic residues over residues 580 to 593 (STEK…KGGD) and 602 to 618 (ESDH…RAAS). Residues 629–645 (HRSHHSIAHSIRSHHTH) show a composition bias toward basic residues.

This sequence belongs to the DSH family. In terms of tissue distribution, expressed throughout the epidermis.

The protein resides in the cytoplasm. Involved in the signal transduction pathway mediated by multiple Wnt genes. Required during ciliogenesis for the docking of basal bodies to the apical plasma membrane. The sequence is that of Segment polarity protein dishevelled homolog DVL-3 from Xenopus laevis (African clawed frog).